The sequence spans 113 residues: Hydrogenase maturation factor HypA (113 aa).

Residue His2 coordinates Ni(2+). Positions 73, 76, 89, and 92 each coordinate Zn(2+).

Belongs to the HypA/HybF family.

Involved in the maturation of [NiFe] hydrogenases. Required for nickel insertion into the metal center of the hydrogenase. This Moorella thermoacetica (strain ATCC 39073 / JCM 9320) protein is Hydrogenase maturation factor HypA.